The chain runs to 211 residues: Proteasome subunit beta (211 aa).

Positions 1-9 (MDNDKYLKG) are cleaved as a propeptide — removed in mature form; by autocatalysis. T10 (nucleophile) is an active-site residue.

It belongs to the peptidase T1B family. As to quaternary structure, the 20S proteasome core is composed of 14 alpha and 14 beta subunits that assemble into four stacked heptameric rings, resulting in a barrel-shaped structure. The two inner rings, each composed of seven catalytic beta subunits, are sandwiched by two outer rings, each composed of seven alpha subunits. The catalytic chamber with the active sites is on the inside of the barrel. Has a gated structure, the ends of the cylinder being occluded by the N-termini of the alpha-subunits. Is capped at one or both ends by the proteasome regulatory ATPase, PAN.

It is found in the cytoplasm. It catalyses the reaction Cleavage of peptide bonds with very broad specificity.. Its activity is regulated as follows. The formation of the proteasomal ATPase PAN-20S proteasome complex, via the docking of the C-termini of PAN into the intersubunit pockets in the alpha-rings, triggers opening of the gate for substrate entry. Interconversion between the open-gate and close-gate conformations leads to a dynamic regulation of the 20S proteasome proteolysis activity. Functionally, component of the proteasome core, a large protease complex with broad specificity involved in protein degradation. This is Proteasome subunit beta from Methanosarcina barkeri (strain Fusaro / DSM 804).